The following is a 561-amino-acid chain: DNA ligase B (561 aa).

Lys-125 (N6-AMP-lysine intermediate) is an active-site residue.

It belongs to the NAD-dependent DNA ligase family. LigB subfamily.

The enzyme catalyses NAD(+) + (deoxyribonucleotide)n-3'-hydroxyl + 5'-phospho-(deoxyribonucleotide)m = (deoxyribonucleotide)n+m + AMP + beta-nicotinamide D-nucleotide.. In terms of biological role, catalyzes the formation of phosphodiester linkages between 5'-phosphoryl and 3'-hydroxyl groups in double-stranded DNA using NAD as a coenzyme and as the energy source for the reaction. The polypeptide is DNA ligase B (Salmonella gallinarum (strain 287/91 / NCTC 13346)).